The chain runs to 294 residues: Osteopontin (294 aa).

An N-terminal signal peptide occupies residues Met-1 to Ser-16. Phosphoserine occurs at positions 24, 26, 27, 61, 62, 75, 77, 80, 106, 109, 112, 115, and 118. The segment at Trp-42–Asp-274 is disordered. Residues Ser-48–Ser-61 show a composition bias toward polar residues. Over residues Asp-85–Asp-110 the composition is skewed to acidic residues. The segment covering Thr-121 to Thr-130 has biased composition (polar residues). O-linked (GalNAc...) threonine glycans are attached at residues Thr-123, Thr-132, and Thr-137. Positions Arg-144–Asp-146 match the Cell attachment site motif. Residues Thr-170 and Thr-175 each carry the phosphothreonine modification. Over residues Leu-174–Leu-187 the composition is skewed to basic and acidic residues. 6 positions are modified to phosphoserine: Ser-176, Ser-180, Ser-200, Ser-209, Ser-213, and Ser-219. A compositionally biased stretch (polar residues) spans Ser-197–Asp-216. The O-linked (Xyl...) (chondroitin sulfate) serine glycan is linked to Ser-219. The segment covering Leu-220–Gln-232 has biased composition (basic and acidic residues). Thr-222 carries the post-translational modification Phosphothreonine. Phosphoserine occurs at positions 228, 231, 234, 238, 243, 247, 250, 255, 260, 271, 283, 288, 290, and 291. Polar residues predominate over residues Ser-234 to Ala-249. Residues Asp-263 to Asp-274 are compositionally biased toward basic and acidic residues. An O-linked (Xyl...) (chondroitin sulfate) serine glycan is attached at Ser-288.

Belongs to the osteopontin family. In terms of assembly, interacts (via N-terminus) with integrin ITGA9:ITGB1. Extensively phosphorylated by FAM20C in the extracellular medium at multiple sites within the S-x-E/pS motif. The phosphorylated form inhibits hydroxyapatite crystallization. Dephosphorylation via a mechanism involving ALPL/TNAP promotes hydroxyapatite crystallization. Post-translationally, O-glycosylated. In terms of processing, forms covalent cross-links mediated by transglutaminase TGM2, between a glutamine and the epsilon-amino group of a lysine residue, forming homopolymers and heteropolymers, increasing its collagen binding properties.

Its subcellular location is the secreted. Functionally, major non-collagenous bone protein that binds tightly to hydroxyapatite. Appears to form an integral part of the mineralized matrix. Probably important to cell-matrix interaction. Acts as a cytokine involved in enhancing production of interferon-gamma and interleukin-12 and reducing production of interleukin-10 and is essential in the pathway that leads to type I immunity. This chain is Osteopontin (Spp1), found in Mus musculus (Mouse).